The sequence spans 503 residues: GMP synthase [glutamine-hydrolyzing] (503 aa).

A Glutamine amidotransferase type-1 domain is found at 3–189; the sequence is PVLVVDFGSQ…AFLSSFAAPN (187 aa). C80 acts as the Nucleophile in catalysis. Catalysis depends on residues H165 and E167. Residues 190–380 enclose the GMPS ATP-PPase domain; that stretch reads WDPEQTICGT…LGIPKHIVHR (191 aa). 217-223 provides a ligand contact to ATP; sequence SGGVDSV.

Homodimer.

The catalysed reaction is XMP + L-glutamine + ATP + H2O = GMP + L-glutamate + AMP + diphosphate + 2 H(+). It functions in the pathway purine metabolism; GMP biosynthesis; GMP from XMP (L-Gln route): step 1/1. In terms of biological role, catalyzes the synthesis of GMP from XMP. The chain is GMP synthase [glutamine-hydrolyzing] from Tropheryma whipplei (strain Twist) (Whipple's bacillus).